A 305-amino-acid polypeptide reads, in one-letter code: UDP-3-O-acyl-N-acetylglucosamine deacetylase (305 aa).

Zn(2+)-binding residues include His-79, His-238, and Asp-242. The Proton donor role is filled by His-265.

The protein belongs to the LpxC family. Requires Zn(2+) as cofactor.

It carries out the reaction a UDP-3-O-[(3R)-3-hydroxyacyl]-N-acetyl-alpha-D-glucosamine + H2O = a UDP-3-O-[(3R)-3-hydroxyacyl]-alpha-D-glucosamine + acetate. It participates in glycolipid biosynthesis; lipid IV(A) biosynthesis; lipid IV(A) from (3R)-3-hydroxytetradecanoyl-[acyl-carrier-protein] and UDP-N-acetyl-alpha-D-glucosamine: step 2/6. Catalyzes the hydrolysis of UDP-3-O-myristoyl-N-acetylglucosamine to form UDP-3-O-myristoylglucosamine and acetate, the committed step in lipid A biosynthesis. This is UDP-3-O-acyl-N-acetylglucosamine deacetylase from Pectobacterium atrosepticum (strain SCRI 1043 / ATCC BAA-672) (Erwinia carotovora subsp. atroseptica).